Here is a 313-residue protein sequence, read N- to C-terminus: Porphobilinogen deaminase (313 aa).

An S-(dipyrrolylmethanemethyl)cysteine modification is found at Cys-242.

It belongs to the HMBS family. As to quaternary structure, monomer. Dipyrromethane serves as cofactor.

It carries out the reaction 4 porphobilinogen + H2O = hydroxymethylbilane + 4 NH4(+). Its pathway is porphyrin-containing compound metabolism; protoporphyrin-IX biosynthesis; coproporphyrinogen-III from 5-aminolevulinate: step 2/4. Tetrapolymerization of the monopyrrole PBG into the hydroxymethylbilane pre-uroporphyrinogen in several discrete steps. The polypeptide is Porphobilinogen deaminase (Pseudomonas aeruginosa (strain LESB58)).